Here is a 998-residue protein sequence, read N- to C-terminus: Protein Smaug (998 aa).

Residues 1–37 (MKYATGTDNAMTSGISGQTNNSNSASNEMQPTTSTPT) show a composition bias toward polar residues. Disordered regions lie at residues 1–45 (MKYA…EATS), 50–69 (TATY…QSQP), and 329–370 (LCPA…GSSS). The span at 329–338 (LCPASGSRSS) shows a compositional bias: low complexity. Phosphoserine is present on residues Ser-564 and Ser-575. The interval 583–763 (EFKPNYIKFH…KDLKFKLSKM (181 aa)) is interaction with cup. The SAM domain occupies 600–654 (GIGLWLKSLRLHKYIELFKNMTYEEMLLITEDFLQSVGVTKGASHKLALCIDKLK). Disordered regions lie at residues 773 to 892 (HVKP…MQQM) and 942 to 977 (NNGS…QQPK). Composition is skewed to polar residues over residues 801-822 (KSGS…NFSL) and 854-864 (HQPQYKSSSYP). Ser-971 carries the phosphoserine modification.

The protein belongs to the SMAUG family. In terms of assembly, interacts with oskar (osk). Binds to the 3'-UTR of nos. Interacts with cup, which in turn recruits eIF4-E, leading to an indirect interaction between smg and eIF4-E that prevents mRNA translation.

It is found in the cytoplasm. Functionally, translation regulator that binds to the 3'-UTR of specific mRNAs such as nanos (nos) and prevent their translation. Prevents translation of unlocalized nos in the bulk cytoplasm via the recruitment of cup. In Drosophila simulans (Fruit fly), this protein is Protein Smaug.